We begin with the raw amino-acid sequence, 323 residues long: Dehydrogenase/reductase SDR family member 7B (323 aa).

Residues 1-4 are Cytoplasmic-facing; sequence MDLT. A helical; Signal-anchor for type II membrane protein membrane pass occupies residues 5-25; it reads SWAIFPLLLASIGVYGLYKLL. The Lumenal portion of the chain corresponds to 26–272; that stretch reads QKLRSGAYLQ…AVGERRKELL (247 aa). NAD(+) is bound by residues S46 and L48. A substrate-binding site is contributed by S178. 3 residues coordinate NAD(+): Y191, K195, and T226. Y191 (proton acceptor) is an active-site residue.

This sequence belongs to the short-chain dehydrogenases/reductases (SDR) family.

Its subcellular location is the endoplasmic reticulum membrane. Functionally, putative oxidoreductase. The sequence is that of Dehydrogenase/reductase SDR family member 7B (dhrs7b) from Xenopus laevis (African clawed frog).